A 68-amino-acid chain; its full sequence is DNA-directed RNA polymerase subunit Rpo10 (68 aa).

C7, C10, C44, and C45 together coordinate Zn(2+).

The protein belongs to the archaeal Rpo10/eukaryotic RPB10 RNA polymerase subunit family. As to quaternary structure, part of the RNA polymerase complex. Zn(2+) is required as a cofactor.

It localises to the cytoplasm. The catalysed reaction is RNA(n) + a ribonucleoside 5'-triphosphate = RNA(n+1) + diphosphate. In terms of biological role, DNA-dependent RNA polymerase (RNAP) catalyzes the transcription of DNA into RNA using the four ribonucleoside triphosphates as substrates. The chain is DNA-directed RNA polymerase subunit Rpo10 from Methanococcus vannielii (strain ATCC 35089 / DSM 1224 / JCM 13029 / OCM 148 / SB).